The following is a 202-amino-acid chain: Small ribosomal subunit protein uS4c (202 aa).

One can recognise an S4 RNA-binding domain in the interval 90–153 (MRLDNVIFRL…KSETIISKNI (64 aa)).

It belongs to the universal ribosomal protein uS4 family. In terms of assembly, part of the 30S ribosomal subunit. Contacts protein S5. The interaction surface between S4 and S5 is involved in control of translational fidelity.

The protein resides in the plastid. It is found in the chloroplast. Functionally, one of the primary rRNA binding proteins, it binds directly to 16S rRNA where it nucleates assembly of the body of the 30S subunit. In terms of biological role, with S5 and S12 plays an important role in translational accuracy. In Sphaerocarpos donnelli (Liverwort), this protein is Small ribosomal subunit protein uS4c (rps4).